Reading from the N-terminus, the 180-residue chain is Adenine phosphoribosyltransferase (180 aa).

Belongs to the purine/pyrimidine phosphoribosyltransferase family. Homodimer.

It is found in the cytoplasm. The enzyme catalyses AMP + diphosphate = 5-phospho-alpha-D-ribose 1-diphosphate + adenine. The protein operates within purine metabolism; AMP biosynthesis via salvage pathway; AMP from adenine: step 1/1. In terms of biological role, catalyzes a salvage reaction resulting in the formation of AMP, that is energically less costly than de novo synthesis. In Rhizobium meliloti (strain 1021) (Ensifer meliloti), this protein is Adenine phosphoribosyltransferase.